The following is a 420-amino-acid chain: Pre-mRNA-splicing factor RBM22 (420 aa).

The C3H1-type zinc finger occupies 159 to 186 (RNRPHICSFWVKGECKRGEECPYRHEKP). Residues 232 to 305 (TTLYVGGLGD…RRLNVKWGRS (74 aa)) form the RRM domain. Disordered stretches follow at residues 303–343 (GRSQ…AAEE) and 372–420 (APPP…HSSP). Basic and acidic residues predominate over residues 309 to 318 (RGKEKDKEGT).

This sequence belongs to the SLT11 family. As to quaternary structure, component of the pre-catalytic and catalytic spliceosome complexes. Component of the postcatalytic spliceosome P complex.

It localises to the nucleus. The protein localises to the cytoplasm. Its function is as follows. Required for pre-mRNA splicing as component of the activated spliceosome. Involved in the first step of pre-mRNA splicing. Binds directly to the internal stem-loop (ISL) domain of the U6 snRNA and to the pre-mRNA intron near the 5' splice site during the activation and catalytic phases of the spliceosome cycle. This Gallus gallus (Chicken) protein is Pre-mRNA-splicing factor RBM22 (RBM22).